The primary structure comprises 170 residues: Peptide deformylase (170 aa).

The Fe cation site is built by Cys-88 and His-130. Residue Glu-131 is part of the active site. His-134 is a binding site for Fe cation.

The protein belongs to the polypeptide deformylase family. Fe(2+) serves as cofactor.

It catalyses the reaction N-terminal N-formyl-L-methionyl-[peptide] + H2O = N-terminal L-methionyl-[peptide] + formate. Functionally, removes the formyl group from the N-terminal Met of newly synthesized proteins. Requires at least a dipeptide for an efficient rate of reaction. N-terminal L-methionine is a prerequisite for activity but the enzyme has broad specificity at other positions. This is Peptide deformylase from Acetivibrio thermocellus (strain ATCC 27405 / DSM 1237 / JCM 9322 / NBRC 103400 / NCIMB 10682 / NRRL B-4536 / VPI 7372) (Clostridium thermocellum).